The sequence spans 194 residues: Cyclin-dependent kinase inhibitor 4 (194 aa).

Residues 49 to 58 (LELRSRRLEK) are compositionally biased toward basic and acidic residues. 2 disordered regions span residues 49–70 (LELRSRRLEKLPPPPPPPPRRR) and 107–139 (TRETTPCSLIRDPDTISTPGSTTRRSHSSSHCK).

The protein belongs to the CDI family. ICK/KRP subfamily.

This Oryza sativa subsp. japonica (Rice) protein is Cyclin-dependent kinase inhibitor 4 (KRP4).